The chain runs to 79 residues: Acyl carrier protein (79 aa).

The region spanning 2–77 is the Carrier domain; that stretch reads ENIEQRVKKI…QAIDYVNAHL (76 aa). Ser37 is modified (O-(pantetheine 4'-phosphoryl)serine).

It belongs to the acyl carrier protein (ACP) family. 4'-phosphopantetheine is transferred from CoA to a specific serine of apo-ACP by AcpS. This modification is essential for activity because fatty acids are bound in thioester linkage to the sulfhydryl of the prosthetic group.

It localises to the cytoplasm. It participates in lipid metabolism; fatty acid biosynthesis. Functionally, carrier of the growing fatty acid chain in fatty acid biosynthesis. The sequence is that of Acyl carrier protein from Azoarcus sp. (strain BH72).